Consider the following 420-residue polypeptide: UDP-N-acetylglucosamine 1-carboxyvinyltransferase (420 aa).

Residue 22 to 23 participates in phosphoenolpyruvate binding; that stretch reads KN. A UDP-N-acetyl-alpha-D-glucosamine-binding site is contributed by R92. Catalysis depends on C116, which acts as the Proton donor. Residue C116 is modified to 2-(S-cysteinyl)pyruvic acid O-phosphothioketal. UDP-N-acetyl-alpha-D-glucosamine-binding positions include 121–125, D304, and I326; that span reads RPVDQ.

This sequence belongs to the EPSP synthase family. MurA subfamily.

The protein resides in the cytoplasm. It catalyses the reaction phosphoenolpyruvate + UDP-N-acetyl-alpha-D-glucosamine = UDP-N-acetyl-3-O-(1-carboxyvinyl)-alpha-D-glucosamine + phosphate. It functions in the pathway cell wall biogenesis; peptidoglycan biosynthesis. Its function is as follows. Cell wall formation. Adds enolpyruvyl to UDP-N-acetylglucosamine. This Paraburkholderia phymatum (strain DSM 17167 / CIP 108236 / LMG 21445 / STM815) (Burkholderia phymatum) protein is UDP-N-acetylglucosamine 1-carboxyvinyltransferase.